Consider the following 73-residue polypeptide: MAIYRRKASPIKIGDAIDYKDVELLSNFLTEQGKILPKRLTGLTNKQQNKVTKAIKRARMLSLLPFVNREGSL.

Belongs to the bacterial ribosomal protein bS18 family. In terms of assembly, part of the 30S ribosomal subunit.

The protein localises to the plastid. The protein resides in the chloroplast. In Rhodomonas salina (Cryptomonas salina), this protein is Small ribosomal subunit protein bS18c.